The sequence spans 179 residues: MAELATIARPYAEALFRVAEGGDISAWSTLVQELAQVAQLPEVLSVASSPKVSRTQVAELLLAALKSPLASGAQAKNFVQMLVDNHRIALSPEIAVQFEALKNAREGAADVQIVSAFPLEGAQLAELVTSLERKFKRKLKPAVEVDSSLIGGVRVTVGDEVLDTSVRARLAGMQAALTA.

It belongs to the ATPase delta chain family. In terms of assembly, F-type ATPases have 2 components, F(1) - the catalytic core - and F(0) - the membrane proton channel. F(1) has five subunits: alpha(3), beta(3), gamma(1), delta(1), epsilon(1). F(0) has three main subunits: a(1), b(2) and c(10-14). The alpha and beta chains form an alternating ring which encloses part of the gamma chain. F(1) is attached to F(0) by a central stalk formed by the gamma and epsilon chains, while a peripheral stalk is formed by the delta and b chains.

The protein resides in the cell inner membrane. Functionally, f(1)F(0) ATP synthase produces ATP from ADP in the presence of a proton or sodium gradient. F-type ATPases consist of two structural domains, F(1) containing the extramembraneous catalytic core and F(0) containing the membrane proton channel, linked together by a central stalk and a peripheral stalk. During catalysis, ATP synthesis in the catalytic domain of F(1) is coupled via a rotary mechanism of the central stalk subunits to proton translocation. In terms of biological role, this protein is part of the stalk that links CF(0) to CF(1). It either transmits conformational changes from CF(0) to CF(1) or is implicated in proton conduction. This chain is ATP synthase subunit delta, found in Burkholderia mallei (strain SAVP1).